The following is a 311-amino-acid chain: Methionyl-tRNA formyltransferase (311 aa).

110–113 (SLLP) contacts (6S)-5,6,7,8-tetrahydrofolate.

Belongs to the Fmt family.

The catalysed reaction is L-methionyl-tRNA(fMet) + (6R)-10-formyltetrahydrofolate = N-formyl-L-methionyl-tRNA(fMet) + (6S)-5,6,7,8-tetrahydrofolate + H(+). Functionally, attaches a formyl group to the free amino group of methionyl-tRNA(fMet). The formyl group appears to play a dual role in the initiator identity of N-formylmethionyl-tRNA by promoting its recognition by IF2 and preventing the misappropriation of this tRNA by the elongation apparatus. The polypeptide is Methionyl-tRNA formyltransferase (Streptococcus gordonii (strain Challis / ATCC 35105 / BCRC 15272 / CH1 / DL1 / V288)).